The primary structure comprises 148 residues: Large ribosomal subunit protein uL15 (148 aa).

Basic and acidic residues predominate over residues 1 to 10; the sequence is MQLHNLEYKK. A disordered region spans residues 1 to 42; sequence MQLHNLEYKKGSRNHKEKRVGRGHGSGLGKTSGRGQDGQKAR. Residues 11 to 22 are compositionally biased toward basic residues; the sequence is GSRNHKEKRVGR. Gly residues predominate over residues 23 to 36; sequence GHGSGLGKTSGRGQ.

It belongs to the universal ribosomal protein uL15 family. In terms of assembly, part of the 50S ribosomal subunit.

Binds to the 23S rRNA. This chain is Large ribosomal subunit protein uL15, found in Ureaplasma parvum serovar 3 (strain ATCC 27815 / 27 / NCTC 11736).